The following is a 144-amino-acid chain: Maximins 2/H8 type 1 (144 aa).

A signal peptide spans 1–18; it reads MNFKYIVAVSFLIASAYA. Positions 19–43 are excised as a propeptide; the sequence is RSEENEIQSLSQRDVLEEESLREMR. Asn70 is subject to Asparagine amide. Positions 74–123 are excised as a propeptide; the sequence is TAEEHEVMKRLETVMRDLDSLDYPEEASERETRGFNQEEIANLFTKKEKR. Residue Ile143 is modified to Isoleucine amide.

Belongs to the bombinin family. As to expression, expressed by the skin glands.

Its subcellular location is the secreted. In terms of biological role, maximin-2 shows antibacterial activity against both Gram-positive and Gram-negative bacteria. It also shows antimicrobial activity against the fungus C.albicans, but not against A.flavus nor P.uticale. It has little hemolytic activity. Functionally, maximin-H8 shows antimicrobial activity against bacteria and against the fungus C.albicans. Shows strong hemolytic activity. In Bombina maxima (Giant fire-bellied toad), this protein is Maximins 2/H8 type 1.